Here is a 109-residue protein sequence, read N- to C-terminus: Parvalbumin alpha (109 aa).

EF-hand domains lie at 38-73 (KSKEIMQKVFHVLDQDQSGFIEKEELCLILKGFTPE) and 77-109 (LSDKETTALLAAGDKDGDGKIGVDEFVTLVSES). Aspartate 51, aspartate 53, serine 55, phenylalanine 57, glutamate 59, glutamate 62, aspartate 90, aspartate 92, aspartate 94, lysine 96, and glutamate 101 together coordinate Ca(2+).

Belongs to the parvalbumin family.

Its function is as follows. In muscle, parvalbumin is thought to be involved in relaxation after contraction. It binds two calcium ions. The sequence is that of Parvalbumin alpha from Pelophylax lessonae (Pool frog).